We begin with the raw amino-acid sequence, 135 residues long: Large ribosomal subunit protein uL16c (135 aa).

It belongs to the universal ribosomal protein uL16 family. In terms of assembly, part of the 50S ribosomal subunit.

The protein localises to the plastid. The protein resides in the chloroplast. In Nymphaea alba (White water-lily), this protein is Large ribosomal subunit protein uL16c.